We begin with the raw amino-acid sequence, 421 residues long: ATP-dependent RNA helicase RhlB (421 aa).

Positions 9–37 (QKFSDFALHPVVVQALEKKGFYNCTPIQA) match the Q motif motif. The region spanning 40-219 (LPLTLAGRDV…FEQMNNAEYV (180 aa)) is the Helicase ATP-binding domain. Residue 53–60 (AQTGTGKT) coordinates ATP. The DEAD box motif lies at 165–168 (DEAD). Positions 245 to 390 (RLLQTLIEEE…VSKYNPDALL (146 aa)) constitute a Helicase C-terminal domain. The disordered stretch occupies residues 390–421 (LSELPPPKRLSRPRTGNGPRRSGAPRNRRRTG). Low complexity predominate over residues 405–414 (GNGPRRSGAP).

This sequence belongs to the DEAD box helicase family. RhlB subfamily. In terms of assembly, component of the RNA degradosome, which is a multiprotein complex involved in RNA processing and mRNA degradation.

The protein localises to the cytoplasm. The catalysed reaction is ATP + H2O = ADP + phosphate + H(+). In terms of biological role, DEAD-box RNA helicase involved in RNA degradation. Has RNA-dependent ATPase activity and unwinds double-stranded RNA. This is ATP-dependent RNA helicase RhlB from Cronobacter sakazakii (strain ATCC BAA-894) (Enterobacter sakazakii).